We begin with the raw amino-acid sequence, 298 residues long: Multifunctional dioxygenase ausE (298 aa).

The substrate site is built by Arg72 and Gln127. The Fe cation site is built by His130 and Asp132. Thr167 is a substrate binding site. His214 contributes to the Fe cation binding site. A substrate-binding site is contributed by Arg226.

Belongs to the PhyH family. As to quaternary structure, homodimer. It depends on Fe cation as a cofactor.

It carries out the reaction preaustinoid A1 + 2-oxoglutarate + O2 = preaustinoid A2 + succinate + CO2 + H2O. The catalysed reaction is preaustinoid A2 + 2-oxoglutarate + O2 = preaustinoid A3 + succinate + CO2 + H2O. It catalyses the reaction berkeleyone A + 2-oxoglutarate + O2 = preaustinoid A + succinate + CO2 + H2O. It participates in secondary metabolite biosynthesis; terpenoid biosynthesis. In terms of biological role, multifunctional dioxygenase; part of the gene cluster that mediates the biosynthesis of calidodehydroaustin, a fungal meroterpenoid. The first step of the pathway is the synthesis of 3,5-dimethylorsellinic acid by the polyketide synthase ausA. 3,5-dimethylorsellinic acid is then prenylated by the polyprenyl transferase ausN. Further epoxidation by the FAD-dependent monooxygenase ausM and cyclization by the probable terpene cyclase ausL lead to the formation of protoaustinoid A. Protoaustinoid A is then oxidized to spiro-lactone preaustinoid A3 by the combined action of the FAD-binding monooxygenases ausB and ausC, and the dioxygenase ausE. Acid-catalyzed keto-rearrangement and ring contraction of the tetraketide portion of preaustinoid A3 by ausJ lead to the formation of preaustinoid A4. The aldo-keto reductase ausK, with the help of ausH, is involved in the next step by transforming preaustinoid A4 into isoaustinone which is in turn hydroxylated by the P450 monooxygenase ausI to form austinolide. The cytochrome P450 monooxygenase ausG modifies austinolide to austinol. Austinol is further acetylated to austin by the O-acetyltransferase ausP, which spontaneously changes to dehydroaustin. The cytochrome P450 monooxygenase ausR then converts dehydroaustin is into 7-dehydrodehydroaustin. The hydroxylation catalyzed by ausR permits the O-acetyltransferase ausQ to add an additional acetyl group to the molecule, leading to the formation of acetoxydehydroaustin. The short chain dehydrogenase ausT catalyzes the reduction of the double bond present between carbon atoms 1 and 2 to convert 7-dehydrodehydroaustin into 1,2-dihydro-7-hydroxydehydroaustin. AusQ catalyzes not only an acetylation reaction but also the addition of the PKS ausV diketide product to 1,2-dihydro-7-hydroxydehydroaustin, forming precalidodehydroaustin. Finally, the iron/alpha-ketoglutarate-dependent dioxygenase converts precalidodehydroaustin into calidodehydroaustin. This chain is Multifunctional dioxygenase ausE, found in Aspergillus calidoustus.